The primary structure comprises 109 residues: Ferredoxin (109 aa).

2 consecutive 4Fe-4S ferredoxin-type domains span residues 2–30 and 31–60; these read TYVV…YEGE and FMLV…PESP. Residues C9 and C17 each contribute to the [3Fe-4S] cluster site. [4Fe-4S] cluster contacts are provided by C21, C40, C43, and C46. C50 lines the [3Fe-4S] cluster pocket.

The cofactor is [4Fe-4S] cluster. It depends on [3Fe-4S] cluster as a cofactor.

In terms of biological role, ferredoxins are iron-sulfur proteins that transfer electrons in a wide variety of metabolic reactions. The polypeptide is Ferredoxin (fdxA) (Rickettsia felis (strain ATCC VR-1525 / URRWXCal2) (Rickettsia azadi)).